A 175-amino-acid polypeptide reads, in one-letter code: ATP synthase subunit b 2 (175 aa).

A helical transmembrane segment spans residues 20 to 40 (LIFWTTITFVLVLIILKKIAW).

The protein belongs to the ATPase B chain family. F-type ATPases have 2 components, F(1) - the catalytic core - and F(0) - the membrane proton channel. F(1) has five subunits: alpha(3), beta(3), gamma(1), delta(1), epsilon(1). F(0) has four main subunits: a(1), b(2) and c(10-14). The alpha and beta chains form an alternating ring which encloses part of the gamma chain. F(1) is attached to F(0) by a central stalk formed by the gamma and epsilon chains, while a peripheral stalk is formed by the delta and b chains.

It is found in the cell inner membrane. Functionally, f(1)F(0) ATP synthase produces ATP from ADP in the presence of a proton or sodium gradient. F-type ATPases consist of two structural domains, F(1) containing the extramembraneous catalytic core and F(0) containing the membrane proton channel, linked together by a central stalk and a peripheral stalk. During catalysis, ATP synthesis in the catalytic domain of F(1) is coupled via a rotary mechanism of the central stalk subunits to proton translocation. Its function is as follows. Component of the F(0) channel, it forms part of the peripheral stalk, linking F(1) to F(0). This chain is ATP synthase subunit b 2, found in Chlorobium luteolum (strain DSM 273 / BCRC 81028 / 2530) (Pelodictyon luteolum).